The chain runs to 284 residues: Undecaprenyl-diphosphatase (284 aa).

A run of 8 helical transmembrane segments spans residues 7 to 27, 44 to 64, 90 to 110, 116 to 136, 167 to 187, 197 to 217, 229 to 249, and 259 to 279; these read IILG…TGHL, EMFD…LYFH, LWLK…PLND, FYHF…FIVI, VLSL…ALLI, FTFF…ILHF, FGVL…AIKF, and FTFF…YAAF.

It belongs to the UppP family.

The protein localises to the cell membrane. The catalysed reaction is di-trans,octa-cis-undecaprenyl diphosphate + H2O = di-trans,octa-cis-undecaprenyl phosphate + phosphate + H(+). Its function is as follows. Catalyzes the dephosphorylation of undecaprenyl diphosphate (UPP). Confers resistance to bacitracin. In Lactococcus lactis subsp. cremoris (strain SK11), this protein is Undecaprenyl-diphosphatase.